The following is a 388-amino-acid chain: tRNA-specific 2-thiouridylase MnmA (388 aa).

Residues 26–33 (GLSGGVDS) and Leu-52 contribute to the ATP site. Cys-113 functions as the Nucleophile in the catalytic mechanism. Residues Cys-113 and Cys-223 are joined by a disulfide bond. An ATP-binding site is contributed by Gly-138. The tract at residues 173–175 (KDQ) is interaction with tRNA. Cys-223 (cysteine persulfide intermediate) is an active-site residue. An interaction with tRNA region spans residues 328 to 329 (RY).

Belongs to the MnmA/TRMU family.

The protein localises to the cytoplasm. The catalysed reaction is S-sulfanyl-L-cysteinyl-[protein] + uridine(34) in tRNA + AH2 + ATP = 2-thiouridine(34) in tRNA + L-cysteinyl-[protein] + A + AMP + diphosphate + H(+). Its function is as follows. Catalyzes the 2-thiolation of uridine at the wobble position (U34) of tRNA, leading to the formation of s(2)U34. The sequence is that of tRNA-specific 2-thiouridylase MnmA from Prochlorococcus marinus (strain NATL2A).